The chain runs to 351 residues: MTIAIGQEEGRGWFDLVDDWLKRDRFVFIGWSGLLLFPTSYLSIGGWFTGTTFVTSWYTHGLASSYLEGCNFFTAAVSTPANSMGHSLLLLWGPEAQGDFTRWCQIGGLWAFCALHGAFGLIGFCLRQFEIARLVGIRPYNAIAFSGPIAIFVSVFLMYPLGQASWFFAPSLGVAAIFRFLLFIQGFHNFTLNPFHMMGVAGILGAALLCAIHGATVQNTIFEDGDAANTFRAFTPTQSEETYSMVTANRFWSQVFGVAFSNKRWLHFFMLFVPLAGLWTSAIGIVGLALNLRAYDFVSQELRAAEDPEFETFYTKNLLLNEGIRSWMAAQDQPHENFIFPEEVLPRGNAL.

Residues 39–59 traverse the membrane as a helical segment; sequence TSYLSIGGWFTGTTFVTSWYT. Residue His-116 coordinates chlorophyll a. The chain crosses the membrane as a helical span at residues 123–139; that stretch reads GFCLRQFEIARLVGIRP. Residues Gln-128 and Asn-141 each contribute to the pheophytin a site. The chain crosses the membrane as a helical span at residues 151–164; that stretch reads IFVSVFLMYPLGQA. A chlorophyll a-binding site is contributed by His-196. Residues 206 to 226 form a helical membrane-spanning segment; sequence AALLCAIHGATVQNTIFEDGD. Positions 213 and 260 each coordinate a plastoquinone. His-213 is a binding site for Fe cation. Residue His-267 participates in Fe cation binding. A helical transmembrane segment spans residues 277 to 293; the sequence is GLWTSAIGIVGLALNLR.

The protein belongs to the reaction center PufL/M/PsbA/D family. As to quaternary structure, PSII is composed of 1 copy each of membrane proteins PsbA, PsbB, PsbC, PsbD, PsbE, PsbF, PsbH, PsbI, PsbJ, PsbK, PsbL, PsbM, PsbT, PsbX, PsbY, PsbZ, Psb30/Ycf12, at least 3 peripheral proteins of the oxygen-evolving complex and a large number of cofactors. It forms dimeric complexes. The cofactor is The D1/D2 heterodimer binds P680, chlorophylls that are the primary electron donor of PSII, and subsequent electron acceptors. It shares a non-heme iron and each subunit binds pheophytin, quinone, additional chlorophylls, carotenoids and lipids. There is also a Cl(-1) ion associated with D1 and D2, which is required for oxygen evolution. The PSII complex binds additional chlorophylls, carotenoids and specific lipids..

Its subcellular location is the plastid. The protein resides in the chloroplast thylakoid membrane. The catalysed reaction is 2 a plastoquinone + 4 hnu + 2 H2O = 2 a plastoquinol + O2. Functionally, photosystem II (PSII) is a light-driven water:plastoquinone oxidoreductase that uses light energy to abstract electrons from H(2)O, generating O(2) and a proton gradient subsequently used for ATP formation. It consists of a core antenna complex that captures photons, and an electron transfer chain that converts photonic excitation into a charge separation. The D1/D2 (PsbA/PsbD) reaction center heterodimer binds P680, the primary electron donor of PSII as well as several subsequent electron acceptors. D2 is needed for assembly of a stable PSII complex. This chain is Photosystem II D2 protein, found in Guillardia theta (Cryptophyte).